The following is a 347-amino-acid chain: Probable magnetosome protein Mms36 (347 aa).

Residues 25 to 45 traverse the membrane as a helical segment; sequence VLVLYLAIAVVVAVLAWPWLA.

It is found in the magnetosome membrane. Functionally, the 4 genes of this operon collectively influence magnetosome size and number. The sequence is that of Probable magnetosome protein Mms36 from Magnetospirillum gryphiswaldense (strain DSM 6361 / JCM 21280 / NBRC 15271 / MSR-1).